A 133-amino-acid polypeptide reads, in one-letter code: Small ribosomal subunit protein uS8 (133 aa).

This sequence belongs to the universal ribosomal protein uS8 family. As to quaternary structure, part of the 30S ribosomal subunit. Contacts proteins S5 and S12.

Functionally, one of the primary rRNA binding proteins, it binds directly to 16S rRNA central domain where it helps coordinate assembly of the platform of the 30S subunit. The sequence is that of Small ribosomal subunit protein uS8 from Endomicrobium trichonymphae.